The sequence spans 235 residues: Glutathione S-transferase L3 (235 aa).

The GST N-terminal domain occupies 27–108 (GTTRLYTSYV…YLDNTFEGPS (82 aa)). Glutathione contacts are provided by residues 37–38 (CP), 65–66 (NR), 79–80 (KV), and 92–93 (ES). Residues 86 to 230 (NGKIIGESLD…MDPKEIVEVF (145 aa)) form the GST C-terminal domain.

Belongs to the GST superfamily. Lambda family.

It is found in the cytoplasm. The protein localises to the cytosol. The catalysed reaction is RX + glutathione = an S-substituted glutathione + a halide anion + H(+). Its function is as follows. Catalyzes the glutathione-dependent reduction of S-glutathionylquercetin to quercetin. The protein is Glutathione S-transferase L3 (GSTL3) of Arabidopsis thaliana (Mouse-ear cress).